An 84-amino-acid chain; its full sequence is Small ribosomal subunit protein bS16 (84 aa).

This sequence belongs to the bacterial ribosomal protein bS16 family.

This chain is Small ribosomal subunit protein bS16, found in Paraburkholderia phytofirmans (strain DSM 17436 / LMG 22146 / PsJN) (Burkholderia phytofirmans).